We begin with the raw amino-acid sequence, 276 residues long: Protein MGF 360-15R (276 aa).

The protein belongs to the asfivirus MGF 360 family.

Its function is as follows. Plays a role in virus cell tropism, and may be required for efficient virus replication in macrophages. This is Protein MGF 360-15R from African swine fever virus (isolate Warthog/Namibia/Wart80/1980) (ASFV).